A 123-amino-acid chain; its full sequence is Thioredoxin H-type 1 (123 aa).

A2 carries the post-translational modification N-acetylalanine. Positions 2–119 (AATAEVIPAG…IEAKLLKHSQ (118 aa)) constitute a Thioredoxin domain. C45 and C48 are oxidised to a cystine.

This sequence belongs to the thioredoxin family. Plant H-type subfamily.

The protein localises to the cytoplasm. Its function is as follows. Participates in various redox reactions through the reversible oxidation of the active center dithiol to a disulfide. The H form is known to activate a number of cytosolic enzymes. This Brassica napus (Rape) protein is Thioredoxin H-type 1 (THL-1).